The chain runs to 188 residues: Adenine phosphoribosyltransferase (188 aa).

Belongs to the purine/pyrimidine phosphoribosyltransferase family. Homodimer.

It localises to the cytoplasm. It carries out the reaction AMP + diphosphate = 5-phospho-alpha-D-ribose 1-diphosphate + adenine. Its pathway is purine metabolism; AMP biosynthesis via salvage pathway; AMP from adenine: step 1/1. In terms of biological role, catalyzes a salvage reaction resulting in the formation of AMP, that is energically less costly than de novo synthesis. This is Adenine phosphoribosyltransferase from Paraburkholderia xenovorans (strain LB400).